Reading from the N-terminus, the 217-residue chain is Ras-related protein RIC2 (217 aa).

Residues 21–28, 69–73, and 127–130 each bind GTP; these read GDSGVGKS, DTAGQ, and NKSD. S-geranylgeranyl cysteine attachment occurs at residues Cys214 and Cys215.

This sequence belongs to the small GTPase superfamily. Rab family.

The protein localises to the cell membrane. In terms of biological role, possesses GTPase activity. The sequence is that of Ras-related protein RIC2 (RIC2) from Oryza sativa subsp. japonica (Rice).